The chain runs to 165 residues: Ribosomal RNA large subunit methyltransferase H (165 aa).

G109 provides a ligand contact to S-adenosyl-L-methionine.

It belongs to the RNA methyltransferase RlmH family. Homodimer.

The protein resides in the cytoplasm. The catalysed reaction is pseudouridine(1915) in 23S rRNA + S-adenosyl-L-methionine = N(3)-methylpseudouridine(1915) in 23S rRNA + S-adenosyl-L-homocysteine + H(+). Its function is as follows. Specifically methylates the pseudouridine at position 1915 (m3Psi1915) in 23S rRNA. This chain is Ribosomal RNA large subunit methyltransferase H, found in Methylorubrum extorquens (strain CM4 / NCIMB 13688) (Methylobacterium extorquens).